Reading from the N-terminus, the 240-residue chain is Keratinocyte-associated protein 3 (240 aa).

Helical transmembrane passes span 21–41, 63–83, 94–114, and 163–183; these read VGLA…VLHG, VISV…LLAS, VLLA…LGLL, and ALAL…LSGY.

The protein belongs to the TMEM54 family. As to expression, expressed in skin, pancreas and keratinocytes.

It localises to the membrane. The protein is Keratinocyte-associated protein 3 (KRTCAP3) of Homo sapiens (Human).